Reading from the N-terminus, the 998-residue chain is Mis18-binding protein 1 (998 aa).

Residue K7 forms a Glycyl lysine isopeptide (Lys-Gly) (interchain with G-Cter in SUMO2) linkage. S9, S109, and S134 each carry phosphoserine. Positions 122 to 153 (QRDKQEQLTRSSSMLGSPQGEHTKDFPPNTDK) are disordered. Basic and acidic residues predominate over residues 142–153 (EHTKDFPPNTDK). Phosphoserine is present on residues S169 and S258. The SANTA domain maps to 336-422 (VHLQEWMIKV…MFGFPHNWKE (87 aa)). Disordered regions lie at residues 438 to 460 (KTRQ…AEDK) and 476 to 502 (DNSL…KERR). Residues 488–497 (PLNSLEQPTS) are compositionally biased toward polar residues. Phosphothreonine occurs at positions 516 and 578. Residues S638 and S639 each carry the phosphoserine modification. Residues 638–660 (SSEENEVEIKSRTRARNTKERLN) are disordered. Basic and acidic residues predominate over residues 644–660 (VEIKSRTRARNTKERLN). A Phosphothreonine modification is found at T688. K707 is covalently cross-linked (Glycyl lysine isopeptide (Lys-Gly) (interchain with G-Cter in SUMO2)). S726 carries the post-translational modification Phosphoserine. The SANT domain occupies 741 to 796 (TDDEEWSEQELQKLHCAFTSLPKHKPGFWSDVAMAVGSRTADECQKKYTEEPQGQG). A Glycyl lysine isopeptide (Lys-Gly) (interchain with G-Cter in SUMO2) cross-link involves residue K765. Residues 784 to 821 (CQKKYTEEPQGQGSRKHGSKKKQANKVQNGEKDSADAK) form a disordered region. Residues 797 to 807 (SRKHGSKKKQA) show a composition bias toward basic residues. A compositionally biased stretch (basic and acidic residues) spans 812-821 (NGEKDSADAK). Residues K821, K828, and K847 each participate in a glycyl lysine isopeptide (Lys-Gly) (interchain with G-Cter in SUMO2) cross-link. S872 carries the phosphoserine modification. K948 is covalently cross-linked (Glycyl lysine isopeptide (Lys-Gly) (interchain with G-Cter in SUMO2)). Residues S955 and S985 each carry the phosphoserine modification. A disordered region spans residues 976-998 (SKYFIDDTESDEEEKDYYFSNSD). Acidic residues predominate over residues 981–990 (DDTESDEEEK).

Interacts with SP1. Interacts with MIS18A. Identified in a complex containing MIS18A, OIP5/MIS18B, MIS18BP1, RBBP7 and RBBP4. Interacts with KAT7/HBO1. Interacts (via N-terminus) with FLNA (via N-terminus).

Its subcellular location is the nucleus. The protein localises to the chromosome. It localises to the centromere. Functionally, required for recruitment of CENPA to centromeres and normal chromosome segregation during mitosis. The polypeptide is Mis18-binding protein 1 (Mis18bp1) (Mus musculus (Mouse)).